A 368-amino-acid chain; its full sequence is Probable multidrug ABC transporter permease YbhR (368 aa).

Residues 1-24 (MFHRLWTLIRKELQSLLREPQTRA) lie on the Cytoplasmic side of the membrane. The helical transmembrane segment at 25–45 (ILILPVLIQVILFPFAATLEV) threads the bilayer. Residues 46–173 (TNATIAIYDE…WYNPNLDYKW (128 aa)) lie on the Periplasmic side of the membrane. An ABC transmembrane type-2 domain is found at 129-366 (AQIAANYLQQ…SAAYAMFRRK (238 aa)). A helical transmembrane segment spans residues 174-194 (FVVPSLIAMITTIGVMIVTSL). Residues 195-222 (SVAREREQGTLDQLLVSPLTTWQIFIGK) lie on the Cytoplasmic side of the membrane. A helical membrane pass occupies residues 223-243 (AVPALIVATFQATIVLAIGIW). Topologically, residues 244–253 (AYQIPFAGSL) are periplasmic. Residues 254–274 (ALFYFTMVIYGLSLVGFGLLI) traverse the membrane as a helical segment. The Cytoplasmic segment spans residues 275 to 284 (SSLCSTQQQA). A helical transmembrane segment spans residues 285 to 305 (FIGVFVFMMPAILLSGYVSPV). The Periplasmic segment spans residues 306 to 339 (ENMPVWLQNLTWINPIRHFTDITKQIYLKDASLD). The chain crosses the membrane as a helical span at residues 340 to 360 (IVWNSLWPLLVITATTGSAAY). At 361 to 368 (AMFRRKVM) the chain is on the cytoplasmic side.

This sequence belongs to the ABC-2 integral membrane protein family. The complex is probably composed of two ATP-binding proteins (YbhF) and two transmembrane proteins (YbhR and YbhS).

It is found in the cell inner membrane. Part of the ABC transporter complex YbhFSR that could be involved in efflux of cefoperazone. Probably involved in the translocation of the substrate across the membrane. The sequence is that of Probable multidrug ABC transporter permease YbhR (ybhR) from Escherichia coli O157:H7.